Here is a 973-residue protein sequence, read N- to C-terminus: NLR family member X1 (973 aa).

Residues 1-84 (MRWGCHLPRT…EAIQRHRRNL (84 aa)) constitute a mitochondrion transit peptide. Residues 73-554 (ATEAIQRHRR…RILPLLFNLL (482 aa)) are required for interaction with MAVS. The 324-residue stretch at 158–481 (QTVVLYGTVG…LRFFLAPCVE (324 aa)) folds into the NACHT domain. ATP is bound at residue 164 to 171 (GTVGTGKS). The segment at 554-972 (LKVVPRVFGR…TLLEQLGGSG (419 aa)) is required for the repression of MAVS-induced interferon signaling. The region spanning 665 to 692 (RQVLPPSELLDHLFFHYEFQNQRFSAEV) is the LRRNT domain. 8 LRR repeats span residues 693–716 (LGSL…VVAS), 722–745 (RHPL…TLMP), 747–775 (LLRA…LLHD), 776–799 (QCQI…VLMD), 809–832 (HLSL…LDRN), 833–855 (KQLQ…ALAK), 856–875 (AARK…ELSS), and 876–897 (EGRQ…VVAS). Residues 904-968 (VSEYWSVILS…SEVKTLLEQL (65 aa)) enclose the LRRCT domain.

Belongs to the NLRP family. Homohexamer. Interacts with MAVS. Interacts with TUFM.

The protein resides in the mitochondrion outer membrane. Functionally, participates in antiviral signaling. Acts as a negative regulator of MAVS-mediated antiviral responses, through the inhibition of the virus-induced RLH (RIG-like helicase)-MAVS interaction. Instead, promotes autophagy by interacting with TUFM and subsequently recruiting the autophagy-related proteins ATG5 and ATG12. Also regulates MAVS-dependent NLRP3 inflammasome activation to attenuate apoptosis. Has no inhibitory function on NF-kappa-B signaling pathway, but enhances NF-kappa-B and JUN N-terminal kinase dependent signaling through the production of reactive oxygen species. Regulates viral mediated-inflammation and energy metabolism in a sex-dependent manner. In females, prevents uncontrolled inflammation and energy metabolism and thus, may contribute to the sex differences observed in infectious and inflammatory diseases. The polypeptide is NLR family member X1 (Nlrx1) (Rattus norvegicus (Rat)).